The following is a 261-amino-acid chain: Neurexophilin-2 (261 aa).

The signal sequence occupies residues 1–22; it reads MSLRPLPLLVVPGLLQLLFCDS. The II stretch occupies residues 23 to 87; sequence EEVIHNTESV…WDWLANITEI (65 aa). Asn-83, Asn-136, Asn-146, and Asn-152 each carry an N-linked (GlcNAc...) asparagine glycan. An III region spans residues 88–166; it reads QEQLARTKRR…LVPPSKVVEF (79 aa). The interval 167–175 is IV (linker domain); the sequence is EISPQSTLE. The v (Cys-rich) stretch occupies residues 176 to 261; that stretch reads TKESKSFNCH…HSETPYLSFG (86 aa).

The protein belongs to the neurexophilin family. In terms of processing, may be proteolytically processed at the boundary between the N-terminal non-conserved and the central conserved domain in neuron-like cells.

It is found in the secreted. May be signaling molecules that resemble neuropeptides and that act by binding to alpha-neurexins and possibly other receptors. In Mus musculus (Mouse), this protein is Neurexophilin-2 (Nxph2).